A 678-amino-acid polypeptide reads, in one-letter code: MEPGGDHRSRSGGGRGGPGPAVTSARGRRLPPTAASGGTEPEEDDGGQALQLEGGALGSWGSTPLPSSRARGPASSGRKYSDHCEARASRPGKSRIPGRDHRRYYHDHWRLEYLMDFIPSRHGMVCMVCGSSLATLKLSTIKRHIRQKHPYSLHWSPREKEVISNSWDAHLGLGAGGEAESLGAQGAEEEEEEDEEEEEGANLQACPPKGSGKAPAGGGCRRQRRGVRGGSVAPRRRRLAASRRAGGSRGLGARRLERRLKESLQNWFRAECLMDYDPRGNRLVCMACGRALPSLHLDDIRAHVLEVHPSSLGLSGPQRSALLQAWGDQPEALSELTQPSPDDDLVPQDLTRKSRDSAPAAGAPSSQDLSPPDVKEEAGWVPERPGPAEEEEGEGEGEREGIPNRPRRGRDHRRHYQERWRLEYLMELDGCRRGLVCMVCGGALASLKMSTIKRHIRQRHPGSNSLSGPVKALIAQEWSEKAAHLLALGLPRPESPSVPVAPSTASASEEGGGAEEAEPEEEWWGDAPLSPGAPSERPAEEEDDEDDSQEPGGLAFPPLPLPPPPPPPPPPPRSREQRRNYQPRWRGEYLMDYDGSRRGLVCMVCGGALATLKVSTIKRHILQVHPFSMDFTPEERQTILEAYEEAALRCYGHEGFGPPAPAPRDSGADLKPGAVCRA.

Disordered regions lie at residues 1 to 100 (MEPG…PGRD), 174 to 250 (GAGG…GSRG), 333 to 413 (LSEL…RDHR), and 493 to 583 (PESP…NYQP). Over residues 66–78 (PSSRARGPASSGR) the composition is skewed to low complexity. Basic and acidic residues predominate over residues 79-88 (KYSDHCEARA). Positions 187 to 200 (AEEEEEEDEEEEEG) are enriched in acidic residues. The span at 205 to 214 (ACPPKGSGKA) shows a compositional bias: low complexity. K375 is covalently cross-linked (Glycyl lysine isopeptide (Lys-Gly) (interchain with G-Cter in SUMO2)). Low complexity predominate over residues 493 to 509 (PESPSVPVAPSTASASE). Acidic residues-rich tracts occupy residues 512–524 (GGAEEAEPEEEWW) and 539–549 (AEEEDDEDDSQ). Over residues 557-572 (PPLPLPPPPPPPPPPP) the composition is skewed to pro residues. Over residues 573 to 583 (RSREQRRNYQP) the composition is skewed to basic and acidic residues.

The protein is Zinc finger translocation-associated protein of Mus musculus (Mouse).